The chain runs to 83 residues: MKLTCVLIVIMLFLTVCPLITADHSRDKQEHPAMRLKDRIRYLRRGKLTRDCKHQNDSCAEEGEECCSDLRCMTSGAGAICVT.

Positions 1-22 (MKLTCVLIVIMLFLTVCPLITA) are cleaved as a signal peptide. The propeptide occupies 23 to 49 (DHSRDKQEHPAMRLKDRIRYLRRGKLT). 3 disulfide bridges follow: Cys-52-Cys-67, Cys-59-Cys-72, and Cys-66-Cys-81.

Belongs to the conotoxin O1 superfamily. As to expression, expressed by the venom duct.

It localises to the secreted. The polypeptide is Conotoxin MiEr92 (Conus miles (Soldier cone)).